The following is a 142-amino-acid chain: MSDSLVVCEVDPELKETLRKFRFRKETNNAAIIMKVDKDRQMVVLEDELQNISPEELKLELPERQPRFVVYSYKYVHDDGRVSYPLCFIFSSPVGCKPEQQMMYAGSKNRLVQTAELTKVFEIRTTDDLTETWLKEKLAFFR.

Position 2 is an N-acetylserine (Ser2). Positions 4 to 139 constitute an ADF-H domain; the sequence is SLVVCEVDPE…TETWLKEKLA (136 aa).

This sequence belongs to the actin-binding proteins ADF family. GMF subfamily.

The sequence is that of Glia maturation factor gamma (Gmfg) from Mus musculus (Mouse).